Here is a 251-residue protein sequence, read N- to C-terminus: Phosphate import ATP-binding protein PstB 2 (251 aa).

Residues 5–246 (LTTENLSLFY…PVKQETNDYI (242 aa)) form the ABC transporter domain. 37-44 (GPSGCGKS) lines the ATP pocket.

Belongs to the ABC transporter superfamily. Phosphate importer (TC 3.A.1.7) family. The complex is composed of two ATP-binding proteins (PstB), two transmembrane proteins (PstC and PstA) and a solute-binding protein (PstS).

The protein resides in the cell membrane. It catalyses the reaction phosphate(out) + ATP + H2O = ADP + 2 phosphate(in) + H(+). Part of the ABC transporter complex PstSACB involved in phosphate import. Responsible for energy coupling to the transport system. The protein is Phosphate import ATP-binding protein PstB 2 of Lactiplantibacillus plantarum (strain ATCC BAA-793 / NCIMB 8826 / WCFS1) (Lactobacillus plantarum).